A 562-amino-acid polypeptide reads, in one-letter code: AT-rich interactive domain-containing protein 1 (562 aa).

The 94-residue stretch at 43 to 136 (KELISLFRPL…YLDAFGRWLN (94 aa)) folds into the ARID domain. Residues 358 to 448 (PCALVGSKFQ…KLELGPAFYM (91 aa)) enclose the ELM2 domain.

It localises to the nucleus. This chain is AT-rich interactive domain-containing protein 1 (ARID1), found in Arabidopsis thaliana (Mouse-ear cress).